We begin with the raw amino-acid sequence, 398 residues long: Lysophospholipid transporter LplT (398 aa).

The next 12 helical transmembrane spans lie at 19 to 39 (VIVA…ATLA), 53 to 73 (VLQM…GQIA), 96 to 116 (ICLG…AAAY), 139 to 159 (LMEA…GVLA), 164 to 184 (IAAL…NLFI), 195 to 213 (SWQL…VVLW), 227 to 247 (LFWG…PVAL), 257 to 277 (YLNA…AKLV), 281 to 301 (TVSR…MFSL), 304 to 324 (ALLP…FFVV), 352 to 372 (NSTM…GVPA), and 373 to 393 (VATG…LWIW).

It belongs to the major facilitator superfamily. LplT (TC 2.A.1.42) family.

The protein resides in the cell inner membrane. Catalyzes the facilitated diffusion of 2-acyl-glycero-3-phosphoethanolamine (2-acyl-GPE) into the cell. This Salmonella arizonae (strain ATCC BAA-731 / CDC346-86 / RSK2980) protein is Lysophospholipid transporter LplT.